The chain runs to 164 residues: Peptidyl-prolyl cis-trans isomerase A (164 aa).

An N-acetylmethionine modification is found at M1. V2 is subject to N-acetylvaline; in Peptidyl-prolyl cis-trans isomerase A, N-terminally processed. Positions 7–163 constitute a PPIase cyclophilin-type domain; that stretch reads FFDIAVDGEP…KKITIANCGQ (157 aa). N6-acetyllysine; alternate is present on K28. K28 participates in a covalent cross-link: Glycyl lysine isopeptide (Lys-Gly) (interchain with G-Cter in SUMO2); alternate. Residue K28 forms a Glycyl lysine isopeptide (Lys-Gly) (interchain with G-Cter in ubiquitin); alternate linkage. N6-acetyllysine is present on residues K44 and K76. S77 carries the phosphoserine modification. K82 bears the N6-acetyllysine; alternate mark. A Glycyl lysine isopeptide (Lys-Gly) (interchain with G-Cter in SUMO2); alternate cross-link involves residue K82. T93 carries the phosphothreonine modification. N108 carries an N-linked (GlcNAc...) asparagine glycan. Residues K125 and K133 each carry the N6-acetyllysine modification.

Belongs to the cyclophilin-type PPIase family. PPIase A subfamily. Interacts with protein phosphatase PPP3CA/calcineurin A. Interacts with isoform 2 of BSG/CD147. Interacts with FOXO1; the interaction promotes FOXO1 dephosphorylation, nuclear accumulation and transcriptional activity. Interacts with integrin ITGA2B:ITGB3; the interaction is ROS and peptidyl-prolyl cis-trans isomerase (PPIase) activity-dependent and is increased in the presence of thrombin. Interacts with MAP3K5. Interacts with TARDBP; the interaction is dependent on the RNA-binding activity of TARDBP and the PPIase activity of PPIA/CYPA and the acetylation of PPIA/CYPA at Lys-125 favors the interaction. Interacts with HNRNPA1, HNRNPA2B1, HNRNPC, RBMX, HNRNPK and HNRNPM. In terms of processing, acetylation at Lys-125 markedly inhibits catalysis of cis to trans isomerization. PPIA acetylation also antagonizes the immunosuppressive effects of cyclosporine by inhibiting the sequential steps of cyclosporine binding and calcineurin inhibition. Acetylation at Lys-125 favors the interaction with TARDBP.

Its subcellular location is the cytoplasm. The protein resides in the secreted. It localises to the nucleus. The catalysed reaction is [protein]-peptidylproline (omega=180) = [protein]-peptidylproline (omega=0). Binds cyclosporin A (CsA). CsA mediates some of its effects via an inhibitory action on PPIase. Catalyzes the cis-trans isomerization of proline imidic peptide bonds in oligopeptides. Exerts a strong chemotactic effect on leukocytes partly through activation of one of its membrane receptors BSG/CD147, initiating a signaling cascade that culminates in MAPK/ERK activation. Activates endothelial cells (ECs) in a proinflammatory manner by stimulating activation of NF-kappa-B and ERK, JNK and p38 MAP-kinases and by inducing expression of adhesion molecules including SELE and VCAM1. Induces apoptosis in ECs by promoting the FOXO1-dependent expression of CCL2 and BCL2L11 which are involved in EC chemotaxis and apoptosis. In response to oxidative stress, initiates proapoptotic and antiapoptotic signaling in ECs via activation of NF-kappa-B and AKT1 and up-regulation of antiapoptotic protein BCL2. Negatively regulates MAP3K5/ASK1 kinase activity, autophosphorylation and oxidative stress-induced apoptosis mediated by MAP3K5/ASK1. Necessary for the assembly of TARDBP in heterogeneous nuclear ribonucleoprotein (hnRNP) complexes and regulates TARDBP binding to RNA UG repeats and TARDBP-dependent expression of HDAC6, ATG7 and VCP which are involved in clearance of protein aggregates. Plays an important role in platelet activation and aggregation. Regulates calcium mobilization and integrin ITGA2B:ITGB3 bidirectional signaling via increased ROS production as well as by facilitating the interaction between integrin and the cell cytoskeleton. Binds heparan sulfate glycosaminoglycans. The polypeptide is Peptidyl-prolyl cis-trans isomerase A (PPIA) (Oryctolagus cuniculus (Rabbit)).